Consider the following 317-residue polypeptide: Apolipoprotein E (317 aa).

The signal sequence occupies residues 1–18 (MKVLWAALLVTFLAGCQA). 8 tandem repeats follow at residues 80–101 (ALMD…EQLT), 102–123 (PVAE…ARLG), 124–145 (ADME…AMLG), 146–167 (QSTE…KRLL), 168–189 (RDAD…EGAE), 190–211 (RGVS…VRAA), 212–233 (TVGS…ERLR), and 234–255 (ARME…EQVA). An 8 X 22 AA approximate tandem repeats region spans residues 80–255 (ALMDETMKEL…RLDEVKEQVA (176 aa)). Position 143 is a methionine sulfoxide (methionine 143). Phosphoserine is present on serine 147. The tract at residues 158 to 168 (HLRKLRKRLLR) is LDL and other lipoprotein receptors binding. 162–165 (LRKR) is a heparin binding site. A lipid-binding and lipoprotein association region spans residues 210–290 (AATVGSLAGQ…SWFEPLVEDM (81 aa)). Residue 229–236 (GERLRARM) coordinates heparin. The homooligomerization stretch occupies residues 266 to 317 (QQIRLQAEAFQARLKSWFEPLVEDMQRQWAGLVEKVQAAMGTSAAPVPSDNH). Positions 278–290 (RLKSWFEPLVEDM) are specificity for association with VLDL.

This sequence belongs to the apolipoprotein A1/A4/E family. As to quaternary structure, homotetramer. May interact with ABCA1; functionally associated with ABCA1 in the biogenesis of HDLs. May interact with APP/A4 amyloid-beta peptide; the interaction is extremely stable in vitro but its physiological significance is unclear. May interact with MAPT. May interact with MAP2. In the cerebrospinal fluid, interacts with secreted SORL1. Interacts with PMEL; this allows the loading of PMEL luminal fragment on ILVs to induce fibril nucleation. APOE exists as multiple glycosylated and sialylated glycoforms within cells and in plasma. The extent of glycosylation and sialylation are tissue and context specific. Post-translationally, glycated in plasma VLDL. In terms of processing, phosphorylated by FAM20C in the extracellular medium.

It is found in the secreted. The protein localises to the extracellular space. It localises to the extracellular matrix. Its subcellular location is the extracellular vesicle. The protein resides in the endosome. It is found in the multivesicular body. In terms of biological role, APOE is an apolipoprotein, a protein associating with lipid particles, that mainly functions in lipoprotein-mediated lipid transport between organs via the plasma and interstitial fluids. APOE is a core component of plasma lipoproteins and is involved in their production, conversion and clearance. Apolipoproteins are amphipathic molecules that interact both with lipids of the lipoprotein particle core and the aqueous environment of the plasma. As such, APOE associates with chylomicrons, chylomicron remnants, very low density lipoproteins (VLDL) and intermediate density lipoproteins (IDL) but shows a preferential binding to high-density lipoproteins (HDL). It also binds a wide range of cellular receptors including the LDL receptor/LDLR, the LDL receptor-related proteins LRP1, LRP2 and LRP8 and the very low-density lipoprotein receptor/VLDLR that mediate the cellular uptake of the APOE-containing lipoprotein particles. Finally, APOE also has a heparin-binding activity and binds heparan-sulfate proteoglycans on the surface of cells, a property that supports the capture and the receptor-mediated uptake of APOE-containing lipoproteins by cells. A main function of APOE is to mediate lipoprotein clearance through the uptake of chylomicrons, VLDLs, and HDLs by hepatocytes. APOE is also involved in the biosynthesis by the liver of VLDLs as well as their uptake by peripheral tissues ensuring the delivery of triglycerides and energy storage in muscle, heart and adipose tissues. By participating in the lipoprotein-mediated distribution of lipids among tissues, APOE plays a critical role in plasma and tissues lipid homeostasis. APOE is also involved in two steps of reverse cholesterol transport, the HDLs-mediated transport of cholesterol from peripheral tissues to the liver, and thereby plays an important role in cholesterol homeostasis. First, it is functionally associated with ABCA1 in the biogenesis of HDLs in tissues. Second, it is enriched in circulating HDLs and mediates their uptake by hepatocytes. APOE also plays an important role in lipid transport in the central nervous system, regulating neuron survival and sprouting. In Gorilla gorilla gorilla (Western lowland gorilla), this protein is Apolipoprotein E (APOE).